The sequence spans 560 residues: uncharacterized protein (560 aa).

The zn(2)-C6 fungal-type DNA-binding region spans 18-44; that stretch reads CLRCRRRKVKCDRQYPCSRCKESEESC. The tract at residues 60 to 80 is disordered; the sequence is LSRPITRETDSSAHQETRTRL. A compositionally biased stretch (basic and acidic residues) spans 64 to 80; the sequence is ITRETDSSAHQETRTRL. A helical membrane pass occupies residues 182-202; it reads FATSIILIVTAIAVALSLESF.

It is found in the nucleus membrane. This is an uncharacterized protein from Schizosaccharomyces pombe (strain 972 / ATCC 24843) (Fission yeast).